A 610-amino-acid chain; its full sequence is MTSDKNPYKTEQRMGAVKAVSGPVVIAENMGGSAMYELVQVGSFRLVGEIIRLEGDTATIQVYEETGGLTVGDPVYCTGKPLSLELGPGIMSEIFDGIQRPLDTIYRMVENVFIPRGVQVKSLNDQKQWDFKPCLKVGDLVSGGDIIGSVVENSLMYNHSIMIPPNVRGRVTSIVPSGNYTLQDDIIELEYNGTVKSLKLMHRWPVRTPRPVASKESGNHPLLTGQRVLDALFPSVQGGTCAIPGAFGCGKTVISQALSKFSNSDAVIYVGCGERGNEMAEVLMDFPTLTTVIDGREESIMKRTCLVANTSNMPVAAREASIYTGITLAEYYRDMGKHIAMMADSTSRWAEALREISGRLAEMPADGGYPAYLSARLASFYERAGRVTCIGGPKREGSVTIVGAVSPPGGDFSDPVTSATLGIVQVFWGLEKRLAQRKHFPSVNWLISYSKYLNALEPFFNTLDPDYMRLRSVAAEILQREEELQEIVQLVGKDSLSESDKIILETAKVIREEFLQQNAFTPYDKYCPPYKTCWMLRNIVAFYEESQRVVAESAGELKITWNYIREMIPHIYTGLTEMKFRDPQEGEEANVEFYRKQNEEIVSAFASLLQ.

An ATP-binding site is contributed by 245–252; it reads GAFGCGKT.

The protein belongs to the ATPase alpha/beta chains family. V-ATPase is a heteromultimeric enzyme composed of a peripheral catalytic V1 complex (main components: subunits A, B, C, D, E, and F) attached to an integral membrane V0 proton pore complex (main component: the proteolipid protein).

The enzyme catalyses ATP + H2O + 4 H(+)(in) = ADP + phosphate + 5 H(+)(out). Catalytic subunit of the peripheral V1 complex of vacuolar ATPase. V-ATPase vacuolar ATPase is responsible for acidifying a variety of intracellular compartments in eukaryotic cells. The protein is V-type proton ATPase catalytic subunit A of Trypanosoma congolense.